We begin with the raw amino-acid sequence, 104 residues long: AVIToxin-VAR2 (104 aa).

The first 19 residues, 1–19 (MRSLLCAPLLLLLLSAGES), serve as a signal peptide directing secretion. 5 disulfide bridges follow: Cys-26–Cys-38, Cys-32–Cys-50, Cys-37–Cys-78, Cys-60–Cys-86, and Cys-80–Cys-96.

This sequence belongs to the AVIT (prokineticin) family. Expressed by the venom gland.

The protein localises to the secreted. Its function is as follows. Potent agonist for both PKR1/PROKR1 and PKR2/PROKR2. Potently contracts gastrointestinal (GI) smooth muscle. The sequence is that of AVIToxin-VAR2 from Varanus varius (Lace monitor lizard).